The sequence spans 123 residues: Small ribosomal subunit protein uS12 (123 aa).

A 3-methylthioaspartic acid modification is found at D89.

It belongs to the universal ribosomal protein uS12 family. As to quaternary structure, part of the 30S ribosomal subunit. Contacts proteins S8 and S17. May interact with IF1 in the 30S initiation complex.

With S4 and S5 plays an important role in translational accuracy. In terms of biological role, interacts with and stabilizes bases of the 16S rRNA that are involved in tRNA selection in the A site and with the mRNA backbone. Located at the interface of the 30S and 50S subunits, it traverses the body of the 30S subunit contacting proteins on the other side and probably holding the rRNA structure together. The combined cluster of proteins S8, S12 and S17 appears to hold together the shoulder and platform of the 30S subunit. The polypeptide is Small ribosomal subunit protein uS12 (Syntrophus aciditrophicus (strain SB)).